The primary structure comprises 508 residues: Histidine ammonia-lyase (508 aa).

The segment at residues 143-145 is a cross-link (5-imidazolinone (Ala-Gly)); sequence ASG. Ser-144 carries the 2,3-didehydroalanine (Ser) modification.

It belongs to the PAL/histidase family. In terms of processing, contains an active site 4-methylidene-imidazol-5-one (MIO), which is formed autocatalytically by cyclization and dehydration of residues Ala-Ser-Gly.

Its subcellular location is the cytoplasm. The enzyme catalyses L-histidine = trans-urocanate + NH4(+). It participates in amino-acid degradation; L-histidine degradation into L-glutamate; N-formimidoyl-L-glutamate from L-histidine: step 1/3. The chain is Histidine ammonia-lyase from Anaeromyxobacter sp. (strain K).